The sequence spans 905 residues: Tight junction protein ZO-3 (905 aa).

In terms of domain architecture, PDZ 1 spans 11–93; sequence TATLYKDPRR…TANVTVKRPR (83 aa). The interval 92-167 is disordered; the sequence is PRRVQLPATK…GGGSEANGLD (76 aa). Residues serine 111 and serine 128 each carry the phosphoserine modification. A compositionally biased stretch (low complexity) spans 124 to 133; the sequence is GDSSSGSGRS. Residues 139 to 155 show a composition bias toward basic residues; the sequence is RRSRAGRRGRVGSHGRR. 5 positions are modified to phosphoserine: serine 156, serine 157, serine 161, serine 195, and serine 311. The PDZ 2 domain occupies 187–264; the sequence is SVLVKRRNSE…ELTLLVLRDS (78 aa). The segment at 289 to 367 is disordered; sequence LTSELSQAPP…QSLEDRGYSP (79 aa). A Phosphothreonine modification is found at threonine 317. Serine 319, serine 343, and serine 359 each carry phosphoserine. Residues 368–434 enclose the PDZ 3 domain; the sequence is DTRVVSFPKG…LTREEAVQFL (67 aa). Residues 464-541 form the SH3 domain; it reads GDSFYIRTHF…PNQSRAEQLA (78 aa). Positions 573-754 constitute a Guanylate kinase-like domain; it reads RRGTKKASTQ…WYQEVKAVIQ (182 aa). Phosphoserine is present on serine 584. 2 disordered regions span residues 773–818 and 850–905; these read EDLD…PQDV and TDKW…ATDL. Residues 851–877 show a composition bias toward basic and acidic residues; that stretch reads DKWETQADSHYTQDQRRQDSMRTYKHE. Residues serine 891 and serine 892 each carry the phosphoserine modification.

This sequence belongs to the MAGUK family. As to quaternary structure, interacts with occludin OCLN, claudins and TPJ1. Interacts with PATJ. Interacts with UBN1. Interacts with FASLG. Interacts with CCND1. In terms of processing, phosphorylated. Is concentrated in various types of epithelium, in tissues such as the lung, liver and kidney, but not in endothelium or at cadherin-based cell-cell adhesion sites.

The protein resides in the cell membrane. The protein localises to the cell junction. Its subcellular location is the tight junction. It localises to the nucleus. In terms of biological role, tjp1, Tjp2, and Tjp3 are closely related scaffolding proteins that link tight junction (TJ) transmembrane proteins such as claudins, junctional adhesion molecules, and occludin to the actin cytoskeleton. The tight junction acts to limit movement of substances through the paracellular space and as a boundary between the compositionally distinct apical and basolateral plasma membrane domains of epithelial and endothelial cells. Binds and recruits PatJ to tight junctions where it connects and stabilizes apical and lateral components of tight junctions. Promotes cell-cycle progression through the sequestration of cyclin D1 (Ccnd1) at tight junctions during mitosis which prevents Ccnd1 degradation during M-phase and enables S-phase transition. With Tjp1 and Tjp2, participates in the junctional retention and stability of the transcription factor DbpA, but is not involved in its shuttling to the nucleus. Contrary to Tjp2, Tjp3 is dispensable for individual viability, embryonic development, epithelial differentiation, and the establishment of TJs, at least in the laboratory environment. The polypeptide is Tight junction protein ZO-3 (Tjp3) (Mus musculus (Mouse)).